Consider the following 522-residue polypeptide: Tryptophan 2-halogenase (522 aa).

FAD is bound by residues Ala17, Glu36, Arg42, His44, Ile45, Ser48, Arg103, Ile127, and Asp296. Positions 307 and 308 each coordinate chloride. Val309 lines the FAD pocket.

This sequence belongs to the flavin-dependent halogenase family.

Involved in the incorporation of a chlorinated tryptophan residue into halogenated forms of the secondary metabolites called chondramides. This chain is Tryptophan 2-halogenase, found in Chondromyces crocatus.